A 194-amino-acid chain; its full sequence is Imidazoleglycerol-phosphate dehydratase (194 aa).

It belongs to the imidazoleglycerol-phosphate dehydratase family.

It localises to the cytoplasm. It carries out the reaction D-erythro-1-(imidazol-4-yl)glycerol 3-phosphate = 3-(imidazol-4-yl)-2-oxopropyl phosphate + H2O. Its pathway is amino-acid biosynthesis; L-histidine biosynthesis; L-histidine from 5-phospho-alpha-D-ribose 1-diphosphate: step 6/9. This chain is Imidazoleglycerol-phosphate dehydratase, found in Bacillus cereus (strain AH820).